Consider the following 751-residue polypeptide: Serine/threonine-protein kinase-like protein CCR4 (751 aa).

Positions 1–31 (MALTISISCFSSYFVSLLLLVLSSFSFVCFS) are cleaved as a signal peptide. Residues 32–366 (LSTVSISHIS…NKTWSRRNIA (335 aa)) are Extracellular-facing. 7 N-linked (GlcNAc...) asparagine glycosylation sites follow: asparagine 42, asparagine 51, asparagine 98, asparagine 243, asparagine 254, asparagine 283, and asparagine 357. The chain crosses the membrane as a helical span at residues 367–387 (FLVVGCVGTFSLLLVISFLIF). Topologically, residues 388 to 751 (KSHCRCRVHD…TETVSRSNTY (364 aa)) are cytoplasmic. The region spanning 443–733 (FSVRFHLGIG…EVVSKLESAL (291 aa)) is the Protein kinase domain. ATP contacts are provided by residues 449–457 (LGIGSFGSV) and lysine 471. Residue aspartate 579 is the Proton acceptor of the active site.

This sequence belongs to the protein kinase superfamily. Ser/Thr protein kinase family. As to quaternary structure, homodimer. Expressed in roots, leaves, especially in trichomes, shoot apical meristems (SAM), and, to a lower extent, in floral buds.

Its subcellular location is the membrane. The catalysed reaction is L-seryl-[protein] + ATP = O-phospho-L-seryl-[protein] + ADP + H(+). It catalyses the reaction L-threonyl-[protein] + ATP = O-phospho-L-threonyl-[protein] + ADP + H(+). In Arabidopsis thaliana (Mouse-ear cress), this protein is Serine/threonine-protein kinase-like protein CCR4 (CCR4).